Consider the following 469-residue polypeptide: Adenosylhomocysteinase (469 aa).

Substrate-binding residues include Thr60, Asp135, and Glu195. 196 to 198 (TTT) is an NAD(+) binding site. Substrate contacts are provided by Lys225 and Asp229. NAD(+)-binding positions include Asn230, 259–264 (GYGDVG), Glu282, Asn317, 338–340 (IGH), and Asn383.

It belongs to the adenosylhomocysteinase family. The cofactor is NAD(+).

It is found in the cytoplasm. The enzyme catalyses S-adenosyl-L-homocysteine + H2O = L-homocysteine + adenosine. The protein operates within amino-acid biosynthesis; L-homocysteine biosynthesis; L-homocysteine from S-adenosyl-L-homocysteine: step 1/1. Its function is as follows. May play a key role in the regulation of the intracellular concentration of adenosylhomocysteine. This is Adenosylhomocysteinase from Hyphomonas neptunium (strain ATCC 15444).